The following is a 122-amino-acid chain: uncharacterized protein (122 aa).

This sequence belongs to the IIV-6 115R family.

This is an uncharacterized protein from Acheta domesticus (House cricket).